The sequence spans 321 residues: ATP-dependent 6-phosphofructokinase (321 aa).

Residue glycine 12 participates in ATP binding. Residues 22 to 26 and 55 to 60 each bind ADP; these read RAVVR and RYSVSD. ATP-binding positions include 73–74 and 103–106; these read RF and GDGS. Aspartate 104 contributes to the Mg(2+) binding site. 127–129 provides a ligand contact to substrate; the sequence is TID. Aspartate 129 serves as the catalytic Proton acceptor. Arginine 156 serves as a coordination point for ADP. Substrate contacts are provided by residues arginine 164 and 171–173; that span reads MGR. Residues 187-189 and 215-217 contribute to the ADP site; these read GCE and KRH. Substrate-binding positions include glutamate 224, arginine 245, and 251–254; that span reads HVQR.

The protein belongs to the phosphofructokinase type A (PFKA) family. ATP-dependent PFK group I subfamily. Prokaryotic clade 'B1' sub-subfamily. Homotetramer. It depends on Mg(2+) as a cofactor.

The protein localises to the cytoplasm. The enzyme catalyses beta-D-fructose 6-phosphate + ATP = beta-D-fructose 1,6-bisphosphate + ADP + H(+). It functions in the pathway carbohydrate degradation; glycolysis; D-glyceraldehyde 3-phosphate and glycerone phosphate from D-glucose: step 3/4. Allosterically activated by ADP and other diphosphonucleosides, and allosterically inhibited by phosphoenolpyruvate. Catalyzes the phosphorylation of D-fructose 6-phosphate to fructose 1,6-bisphosphate by ATP, the first committing step of glycolysis. This chain is ATP-dependent 6-phosphofructokinase, found in Actinobacillus succinogenes (strain ATCC 55618 / DSM 22257 / CCUG 43843 / 130Z).